The sequence spans 264 residues: Thymidylate synthase (264 aa).

Arginine 21 is a binding site for dUMP. Histidine 51 serves as a coordination point for (6R)-5,10-methylene-5,6,7,8-tetrahydrofolate. 126 to 127 (RR) is a binding site for dUMP. The active-site Nucleophile is the cysteine 146. Residues 166–169 (RSAD), asparagine 177, and 207–209 (HIY) contribute to the dUMP site. Aspartate 169 is a (6R)-5,10-methylene-5,6,7,8-tetrahydrofolate binding site. Serine 263 provides a ligand contact to (6R)-5,10-methylene-5,6,7,8-tetrahydrofolate.

Belongs to the thymidylate synthase family. Bacterial-type ThyA subfamily. As to quaternary structure, homodimer.

Its subcellular location is the cytoplasm. The enzyme catalyses dUMP + (6R)-5,10-methylene-5,6,7,8-tetrahydrofolate = 7,8-dihydrofolate + dTMP. The protein operates within pyrimidine metabolism; dTTP biosynthesis. Functionally, catalyzes the reductive methylation of 2'-deoxyuridine-5'-monophosphate (dUMP) to 2'-deoxythymidine-5'-monophosphate (dTMP) while utilizing 5,10-methylenetetrahydrofolate (mTHF) as the methyl donor and reductant in the reaction, yielding dihydrofolate (DHF) as a by-product. This enzymatic reaction provides an intracellular de novo source of dTMP, an essential precursor for DNA biosynthesis. The protein is Thymidylate synthase of Bacillus pumilus (strain SAFR-032).